A 182-amino-acid polypeptide reads, in one-letter code: Adenine phosphoribosyltransferase (182 aa).

It belongs to the purine/pyrimidine phosphoribosyltransferase family. As to quaternary structure, homodimer.

Its subcellular location is the cytoplasm. It carries out the reaction AMP + diphosphate = 5-phospho-alpha-D-ribose 1-diphosphate + adenine. It participates in purine metabolism; AMP biosynthesis via salvage pathway; AMP from adenine: step 1/1. In terms of biological role, catalyzes a salvage reaction resulting in the formation of AMP, that is energically less costly than de novo synthesis. In Campylobacter jejuni subsp. jejuni serotype O:2 (strain ATCC 700819 / NCTC 11168), this protein is Adenine phosphoribosyltransferase.